The sequence spans 184 residues: Protein GrpE (184 aa).

Acidic residues predominate over residues 1–10 (MTDTPPENEE). The segment at 1–22 (MTDTPPENEEQHESNVQNENEV) is disordered.

It belongs to the GrpE family. As to quaternary structure, homodimer.

The protein resides in the cytoplasm. Participates actively in the response to hyperosmotic and heat shock by preventing the aggregation of stress-denatured proteins, in association with DnaK and GrpE. It is the nucleotide exchange factor for DnaK and may function as a thermosensor. Unfolded proteins bind initially to DnaJ; upon interaction with the DnaJ-bound protein, DnaK hydrolyzes its bound ATP, resulting in the formation of a stable complex. GrpE releases ADP from DnaK; ATP binding to DnaK triggers the release of the substrate protein, thus completing the reaction cycle. Several rounds of ATP-dependent interactions between DnaJ, DnaK and GrpE are required for fully efficient folding. The protein is Protein GrpE of Chlamydia pneumoniae (Chlamydophila pneumoniae).